A 301-amino-acid chain; its full sequence is GTPase Era (301 aa).

One can recognise an Era-type G domain in the interval 7-175 (YCGFIAIVGR…AGIVRKHLPE (169 aa)). The tract at residues 15–22 (GRPNVGKS) is G1. A GTP-binding site is contributed by 15-22 (GRPNVGKS). Residues 41–45 (QTTRH) are G2. Positions 62 to 65 (DTPG) are G3. Residues 62–66 (DTPGL) and 124–127 (NKVD) contribute to the GTP site. The tract at residues 124 to 127 (NKVD) is G4. The G5 stretch occupies residues 154-156 (ISA). In terms of domain architecture, KH type-2 spans 206-283 (LGAELPYSVT…HLELWVKVKS (78 aa)).

Belongs to the TRAFAC class TrmE-Era-EngA-EngB-Septin-like GTPase superfamily. Era GTPase family. In terms of assembly, monomer.

The protein resides in the cytoplasm. The protein localises to the cell inner membrane. In terms of biological role, an essential GTPase that binds both GDP and GTP, with rapid nucleotide exchange. Plays a role in 16S rRNA processing and 30S ribosomal subunit biogenesis and possibly also in cell cycle regulation and energy metabolism. The polypeptide is GTPase Era (Salmonella agona (strain SL483)).